Consider the following 335-residue polypeptide: Beta-hexosaminidase (335 aa).

Residues aspartate 60, arginine 68, arginine 133, and 163–164 (KH) contribute to the substrate site. The active-site Proton donor/acceptor is the histidine 176. The Nucleophile role is filled by aspartate 247.

It belongs to the glycosyl hydrolase 3 family. NagZ subfamily. Monomer.

The protein resides in the cytoplasm. It carries out the reaction Hydrolysis of terminal non-reducing N-acetyl-D-hexosamine residues in N-acetyl-beta-D-hexosaminides.. It participates in cell wall biogenesis; peptidoglycan recycling. Functionally, plays a role in peptidoglycan recycling by cleaving the terminal beta-1,4-linked N-acetylglucosamine (GlcNAc) from peptide-linked peptidoglycan fragments, giving rise to free GlcNAc, anhydro-N-acetylmuramic acid and anhydro-N-acetylmuramic acid-linked peptides. The sequence is that of Beta-hexosaminidase from Xylella fastidiosa (strain 9a5c).